Here is a 458-residue protein sequence, read N- to C-terminus: Major capsid protein (458 aa).

Positions 21 to 110 form a coiled coil; the sequence is LEGLTAAQKA…EIKSLLTARE (90 aa).

The protein belongs to the HK97 phage major capsid protein family. Interacts with the decoration protein; each hexon binds a single copy of the decoration protein. Interacts with the portal protein. The scaffolding domain delta is cleaved by the prohead protease and lost after assembly. The major capsid protein precursors together with both the portal complex and the maturation protease form prohead I. All copies of the major capsid protein precursor are cleaved to the mature major capsid protein by release of the scaffolding domain delta, yielding the metastable prohead II.

Its subcellular location is the virion. Its function is as follows. Major capsid protein that self-associates to form 120 hexamers and 11 pentamers, building the T=13 icosahedral capsid which about 860 Angstroms in diameter. Responsible for its self-assembly into a procapsid. The phage does not need to encode a separate scaffolfing protein because its capsid protein contains the delta domain that carries that function. The capsid gains its final stability through the reorganization of the subunits that takes place upon expansion. DNA encapsidation through the portal triggers capsid expansion and the binding of the decoration protein to the capsid exterior. Might play a role in counteracting the host Pycsar defense system that is mediated by pyrimidine cyclases and leads to abortive infection. This Escherichia coli (Enterobacteria phage T5) protein is Major capsid protein.